The chain runs to 294 residues: Shikimate dehydrogenase (NADP(+)) (294 aa).

Shikimate is bound by residues 25-27 and Thr-72; that span reads SAS. Lys-76 acts as the Proton acceptor in catalysis. Positions 97 and 112 each coordinate shikimate. NADP(+)-binding positions include 136 to 140 and Thr-234; that span reads GAGGA. Residue Tyr-236 participates in shikimate binding. Position 257 (Gly-257) interacts with NADP(+).

It belongs to the shikimate dehydrogenase family. As to quaternary structure, homodimer.

It carries out the reaction shikimate + NADP(+) = 3-dehydroshikimate + NADPH + H(+). It participates in metabolic intermediate biosynthesis; chorismate biosynthesis; chorismate from D-erythrose 4-phosphate and phosphoenolpyruvate: step 4/7. Functionally, involved in the biosynthesis of the chorismate, which leads to the biosynthesis of aromatic amino acids. Catalyzes the reversible NADPH linked reduction of 3-dehydroshikimate (DHSA) to yield shikimate (SA). This Symbiobacterium thermophilum (strain DSM 24528 / JCM 14929 / IAM 14863 / T) protein is Shikimate dehydrogenase (NADP(+)).